The chain runs to 39 residues: Photosystem II reaction center protein L (39 aa).

The chain crosses the membrane as a helical span at residues serine 18–phenylalanine 38.

This sequence belongs to the PsbL family. PSII is composed of 1 copy each of membrane proteins PsbA, PsbB, PsbC, PsbD, PsbE, PsbF, PsbH, PsbI, PsbJ, PsbK, PsbL, PsbM, PsbT, PsbX, PsbY, PsbZ, Psb30/Ycf12, at least 3 peripheral proteins of the oxygen-evolving complex and a large number of cofactors. It forms dimeric complexes.

The protein localises to the plastid thylakoid membrane. One of the components of the core complex of photosystem II (PSII). PSII is a light-driven water:plastoquinone oxidoreductase that uses light energy to abstract electrons from H(2)O, generating O(2) and a proton gradient subsequently used for ATP formation. It consists of a core antenna complex that captures photons, and an electron transfer chain that converts photonic excitation into a charge separation. This subunit is found at the monomer-monomer interface and is required for correct PSII assembly and/or dimerization. This Cuscuta gronovii (Common dodder) protein is Photosystem II reaction center protein L.